The primary structure comprises 497 residues: Acetyl-coenzyme A carboxylase carboxyl transferase subunit beta, chloroplastic (497 aa).

The region spanning 230-497 (LWVQCENCYG…FFPVNSNSIK (268 aa)) is the CoA carboxyltransferase N-terminal domain. Zn(2+) is bound by residues C234, C237, C253, and C256. A C4-type zinc finger spans residues 234-256 (CENCYGLNYKKFFRSKFNICEQC).

The protein belongs to the AccD/PCCB family. Acetyl-CoA carboxylase is a heterohexamer composed of biotin carboxyl carrier protein, biotin carboxylase and 2 subunits each of ACCase subunit alpha and ACCase plastid-coded subunit beta (accD). The cofactor is Zn(2+).

Its subcellular location is the plastid. The protein localises to the chloroplast stroma. It carries out the reaction N(6)-carboxybiotinyl-L-lysyl-[protein] + acetyl-CoA = N(6)-biotinyl-L-lysyl-[protein] + malonyl-CoA. It participates in lipid metabolism; malonyl-CoA biosynthesis; malonyl-CoA from acetyl-CoA: step 1/1. Component of the acetyl coenzyme A carboxylase (ACC) complex. Biotin carboxylase (BC) catalyzes the carboxylation of biotin on its carrier protein (BCCP) and then the CO(2) group is transferred by the transcarboxylase to acetyl-CoA to form malonyl-CoA. This is Acetyl-coenzyme A carboxylase carboxyl transferase subunit beta, chloroplastic from Nandina domestica (Heavenly bamboo).